The primary structure comprises 527 residues: DNA polymerase epsilon subunit 2 (527 aa).

Belongs to the DNA polymerase epsilon subunit B family. As to quaternary structure, component of the DNA polymerase epsilon complex consisting of four subunits: the catalytic subunit POLE and the accessory subunits POLE2, POLE3 and POLE4.

It is found in the nucleus. In terms of biological role, accessory component of the DNA polymerase epsilon complex. Participates in DNA repair and in chromosomal DNA replication. This chain is DNA polymerase epsilon subunit 2 (POLE2), found in Bos taurus (Bovine).